A 396-amino-acid polypeptide reads, in one-letter code: Phospholipase A1-II 4 (396 aa).

Ser-221 acts as the Acyl-ester intermediate in catalysis. Active-site charge relay system residues include Ser-221, Asp-282, and His-319.

It belongs to the AB hydrolase superfamily. Lipase family.

It is found in the cytoplasm. Functionally, acylhydrolase that catalyzes the hydrolysis of phospholipids at the sn-1 position. The polypeptide is Phospholipase A1-II 4 (Oryza sativa subsp. japonica (Rice)).